The primary structure comprises 239 residues: Leucine rich adaptor protein 1 (239 aa).

LRR repeat units follow at residues 55–83 (LGDKIMALRMELAYLRAIDVKILQQLVTL) and 93–114 (LLEERGTLTSHCSSLTSSQYSL). Low complexity predominate over residues 107–118 (LTSSQYSLTGGS). A disordered region spans residues 107–140 (LTSSQYSLTGGSPERSRRGSWDSLPDTSSTDRLD). 3 positions are modified to phosphoserine: serine 118, serine 126, and serine 129.

As to quaternary structure, forms a tripartite complex with CDC42BPA/CDC42BPB and MYO18A acting as an adapter connecting both. Its binding to CDC42BPA/CDC42BPB results in their activation by abolition of their negative autoregulation. Interacts with CDC42BPA and CDC42BPB. In terms of processing, phosphorylated.

It is found in the cytoplasm. Functionally, acts as an activator of the canonical NF-kappa-B pathway and drive the production of pro-inflammatory cytokines. Promotes the antigen (Ag)-presenting and priming function of dendritic cells via the canonical NF-kappa-B pathway. In concert with MYO18A and CDC42BPA/CDC42BPB, is involved in modulating lamellar actomyosin retrograde flow that is crucial to cell protrusion and migration. Activates CDC42BPA/CDC42BPB and targets it to actomyosin through its interaction with MYO18A, leading to MYL9/MLC2 phosphorylation and MYH9/MYH10-dependent actomyosin assembly in the lamella. The sequence is that of Leucine rich adaptor protein 1 (Lurap1) from Rattus norvegicus (Rat).